We begin with the raw amino-acid sequence, 228 residues long: Glutamate transport system permease protein GluC (228 aa).

4 helical membrane-spanning segments follow: residues 16–36, 64–84, 100–120, and 195–215; these read FWVT…LGTI, LTLV…LTLA, AVLG…RSGI, and LFVV…PMGL. Positions 16 to 217 constitute an ABC transmembrane type-1 domain; the sequence is FWVTIQLTVY…ILTLPMGLGL (202 aa).

Belongs to the binding-protein-dependent transport system permease family. HisMQ subfamily. As to quaternary structure, the complex is composed of two ATP-binding proteins (GluA), two transmembrane proteins (GluC and GluD) and a solute-binding protein (GluB).

It localises to the cell membrane. In terms of biological role, part of the ABC transporter complex GluABCD involved in glutamate uptake. Probably responsible for the translocation of the substrate across the membrane. The polypeptide is Glutamate transport system permease protein GluC (Corynebacterium efficiens (strain DSM 44549 / YS-314 / AJ 12310 / JCM 11189 / NBRC 100395)).